An 886-amino-acid chain; its full sequence is Conserved oligomeric Golgi complex subunit 1 (886 aa).

The segment covering 834-846 (SAERKSPIQEPVE) has biased composition (basic and acidic residues). The tract at residues 834–886 (SAERKSPIQEPVEKTATTTPTRKSGGNGARKGDSSKSKSSAASFFGMSQEWFR) is disordered. Serine 839 carries the post-translational modification Phosphoserine. The span at 848–857 (TATTTPTRKS) shows a compositional bias: polar residues.

The protein belongs to the COG1 family. As to quaternary structure, component of the conserved oligomeric Golgi complex which is composed of eight different subunits and is required for normal Golgi morphology and localization.

It localises to the golgi apparatus membrane. Functionally, required for normal Golgi function. The protein is Conserved oligomeric Golgi complex subunit 1 of Drosophila melanogaster (Fruit fly).